The chain runs to 800 residues: Structural protein ORF800 (800 aa).

4 coiled-coil regions span residues 98–130 (AENI…YNLA), 447–475 (LLAE…ANNL), 514–567 (AINQ…ANNL), and 606–633 (AINQ…NLLA). Positions 759 to 800 (AESIAESESETTESENNETTESTANSEGEKQEGEHGARLIRV) are disordered. The span at 761–776 (SIAESESETTESENNE) shows a compositional bias: acidic residues. The segment covering 785–800 (EGEKQEGEHGARLIRV) has biased composition (basic and acidic residues).

The protein localises to the virion. The polypeptide is Structural protein ORF800 (Acidianus convivator (ATV)).